The chain runs to 161 residues: uncharacterized protein (161 aa).

This is an uncharacterized protein from Escherichia coli (strain K12).